The sequence spans 139 residues: Large ribosomal subunit protein uL16 (139 aa).

Positions 1–19 are enriched in basic residues; that stretch reads MLIPRRVKHRKQHHPKRSG. The disordered stretch occupies residues 1 to 25; sequence MLIPRRVKHRKQHHPKRSGMSKGGT.

The protein belongs to the universal ribosomal protein uL16 family. As to quaternary structure, part of the 50S ribosomal subunit.

Its function is as follows. Binds 23S rRNA and is also seen to make contacts with the A and possibly P site tRNAs. The polypeptide is Large ribosomal subunit protein uL16 (Streptomyces griseus subsp. griseus (strain JCM 4626 / CBS 651.72 / NBRC 13350 / KCC S-0626 / ISP 5235)).